We begin with the raw amino-acid sequence, 386 residues long: Acetylornithine aminotransferase (386 aa).

Residues 96-97 and phenylalanine 123 contribute to the pyridoxal 5'-phosphate site; that span reads GA. Arginine 126 provides a ligand contact to N(2)-acetyl-L-ornithine. 208-211 serves as a coordination point for pyridoxal 5'-phosphate; the sequence is DEVQ. Lysine 237 carries the post-translational modification N6-(pyridoxal phosphate)lysine. Serine 265 provides a ligand contact to N(2)-acetyl-L-ornithine. Position 266 (threonine 266) interacts with pyridoxal 5'-phosphate.

It belongs to the class-III pyridoxal-phosphate-dependent aminotransferase family. ArgD subfamily. In terms of assembly, homodimer. Requires pyridoxal 5'-phosphate as cofactor.

The protein localises to the cytoplasm. The catalysed reaction is N(2)-acetyl-L-ornithine + 2-oxoglutarate = N-acetyl-L-glutamate 5-semialdehyde + L-glutamate. The protein operates within amino-acid biosynthesis; L-arginine biosynthesis; N(2)-acetyl-L-ornithine from L-glutamate: step 4/4. The protein is Acetylornithine aminotransferase of Bacillus anthracis.